Consider the following 293-residue polypeptide: MFALRTAARPAARSVGATRNYATLREIEMRLKSIKNIEKITNTMKIVASTKLGKAQRAMATSKVYNEASEKVFENSETAVPENIEKRLWVVVSSDKGLCGSIHSQLARTVRRKLLDFESGEKLIDIVAVGEKIKAQLGRSNPEQMRLSFGGTGKEAPTFEEAAHIADEILALDTQYDDIEIVYNKVLSGISFEPIMKESYSAKAIEDAPKFGQYELEDDVVKNLADFSLANTIYAAMAEGHAAEISARRNAMDNASKNASDMINKYSILYNRTRQAVITNELVDIITGASSLE.

Residues 1–21 (MFALRTAARPAARSVGATRNY) constitute a mitochondrion transit peptide.

As to quaternary structure, F-type ATP synthases have 2 components, the catalytic core F(1) and the membrane-embedded component F(0), linked together by a central stalk and a peripheral stalk. The central stalk, also called rotor shaft, is often seen as part of F(1). The peripheral stalk is seen as part of F(0). F(0) contains the membrane channel next to the rotor. F-type ATP synthases form dimers but each monomer functions independently in ATP generation. The dimer consists of 17 different polypeptides: ATP1 (subunit alpha, 3 molecules per monomer, part of F(1)), ATP2 (subunit beta, 3 copies per monomer, part of F(1)), ATP3 (subunit gamma, part of the central stalk), ATP4 (subunit b, part of the peripheral stalk), ATP5/OSCP (subunit 5/OSCP, part of the peripheral stalk), ATP6 (subunit a, part of the peripheral stalk), ATP7 (subunit d, part of the peripheral stalk), ATP8 (subunit 8, part of the peripheral stalk), OLI1 (subunit c, part of the rotor, 10 molecules per monomer), ATP14 (subunit h, part of the peripheral stalk), ATP15 (subunit epsilon, part of the central stalk), ATP16 (subunit delta, part of the central stalk), ATP17 (subunit f, part of the peripheral stalk), ATP18 (subunit i/j, part of the peripheral stalk), ATP19 (subunit k, dimer-specific, at interface between monomers), ATP20 (subunit g, at interface between monomers), TIM11 (subunit e, at interface between monomers).

Its subcellular location is the mitochondrion inner membrane. Functionally, mitochondrial membrane ATP synthase (F(1)F(0) ATP synthase or Complex V) produces ATP from ADP in the presence of a proton gradient across the membrane which is generated by electron transport complexes of the respiratory chain. F-type ATP synthases consist of two structural domains, F(1) - containing the extramembraneous catalytic core, and F(0) - containing the membrane proton channel, linked together by a central stalk and a peripheral stalk. During catalysis, ATP synthesis in the catalytic domain of F(1) is coupled via a rotary mechanism of the central stalk subunits to proton translocation. Part of the complex F(1) domain and the central stalk which is part of the complex rotary element. The gamma/ATP3 subunit protrudes into the catalytic domain formed of alpha/ATP1(3)beta/ATP2(3). Rotation of the central stalk against the surrounding alpha/ATP1(3)beta/ATP2(3) subunits leads to hydrolysis of ATP in three separate catalytic sites on the beta/ATP2 subunits. The chain is ATP synthase subunit gamma, mitochondrial from Yarrowia lipolytica (strain CLIB 122 / E 150) (Yeast).